Reading from the N-terminus, the 57-residue chain is UPF0391 membrane protein RPC_3278 (57 aa).

The next 2 membrane-spanning stretches (helical) occupy residues 4 to 24 (WVIT…GGIA) and 30 to 50 (IAKI…VVGL).

This sequence belongs to the UPF0391 family.

It localises to the cell membrane. This is UPF0391 membrane protein RPC_3278 from Rhodopseudomonas palustris (strain BisB18).